The primary structure comprises 457 residues: Metacaspase-1 (457 aa).

A disordered region spans residues 1-149 (MSWNQYPGGG…PQLQGQGGQS (149 aa)). Residues 7–18 (PGGGHHQQGGYG) are compositionally biased toward gly residues. Positions 20-56 (RPPPPQWAQQGPPPPPNMGYRPPPPPQAYYNNPPPPQ) are enriched in pro residues. The segment covering 57 to 83 (QYQRPAPQQNGYQQGGYQQQQQSQGNY) has biased composition (low complexity). Residues H247 and C303 contribute to the active site.

The protein belongs to the peptidase C14B family.

Functionally, involved in cell death (apoptosis). The sequence is that of Metacaspase-1 (MCA1) from Cryptococcus neoformans var. neoformans serotype D (strain JEC21 / ATCC MYA-565) (Filobasidiella neoformans).